We begin with the raw amino-acid sequence, 335 residues long: Dihydroorotate dehydrogenase (quinone) (335 aa).

Residues 58 to 62 and Thr-82 contribute to the FMN site; that span reads AGADK. Lys-62 contacts substrate. Residue 107–111 coordinates substrate; sequence NRNGF. Residues Asn-135 and Asn-168 each contribute to the FMN site. Substrate is bound at residue Asn-168. The Nucleophile role is filled by Ser-171. Asn-173 is a substrate binding site. Residues Lys-213 and Gly-241 each contribute to the FMN site. 242–243 is a binding site for substrate; sequence NT. FMN-binding positions include Gly-264, Gly-293, and 314–315; that span reads YS.

It belongs to the dihydroorotate dehydrogenase family. Type 2 subfamily. As to quaternary structure, monomer. FMN is required as a cofactor.

The protein localises to the cell membrane. It carries out the reaction (S)-dihydroorotate + a quinone = orotate + a quinol. The protein operates within pyrimidine metabolism; UMP biosynthesis via de novo pathway; orotate from (S)-dihydroorotate (quinone route): step 1/1. Catalyzes the conversion of dihydroorotate to orotate with quinone as electron acceptor. In Actinobacillus pleuropneumoniae serotype 7 (strain AP76), this protein is Dihydroorotate dehydrogenase (quinone).